The primary structure comprises 51 residues: uncharacterized protein (51 aa).

This is an uncharacterized protein from Rickettsia conorii (strain ATCC VR-613 / Malish 7).